A 442-amino-acid chain; its full sequence is MITPKVLSGFKDRLPKDAIQKAQLLAKVSVVFQSFGFVPIETPHLEYAQTLLPDTSSDIQKEIYRFKDHGDRDVALRFDLTVPLARFVSLHHQILGMPFKRYAIGNVFRGERAQKGRYREFTQCDFDFIGSESLVCDAEIIQVIIASLKALDLEDFCVSINHRKILNGICEYFRISQVNEALRIVDKLEKIGLDGVEEELKKECDLNSNTIKELLEMVQIKQNDLSHAEFFEKIAYLKDYNENLKKGIQDLERLYQLLGDLQISQNLYKIDFSIARGLGYYTGIVYETTLNEMKSLGSVCSGGRYDHLTKNFSKENLQGVGASIGIDRLIVALSEMQLLDERSTQAKVLIACMHEEYFSYANRLAESLRQSGIFSEVYPEAQKIKKPFSYANHRGHEFVAVIGEEEFKSETLSLKNMHSGMQLNCLSFLKALEIIGENDEDL.

The protein belongs to the class-II aminoacyl-tRNA synthetase family. Homodimer.

It localises to the cytoplasm. The catalysed reaction is tRNA(His) + L-histidine + ATP = L-histidyl-tRNA(His) + AMP + diphosphate + H(+). The protein is Histidine--tRNA ligase of Helicobacter pylori (strain P12).